A 162-amino-acid chain; its full sequence is Large ribosomal subunit protein uL10 (162 aa).

It belongs to the universal ribosomal protein uL10 family. In terms of assembly, part of the ribosomal stalk of the 50S ribosomal subunit. The N-terminus interacts with L11 and the large rRNA to form the base of the stalk. The C-terminus forms an elongated spine to which L12 dimers bind in a sequential fashion forming a multimeric L10(L12)X complex.

Forms part of the ribosomal stalk, playing a central role in the interaction of the ribosome with GTP-bound translation factors. The protein is Large ribosomal subunit protein uL10 of Vibrio cholerae serotype O1 (strain ATCC 39541 / Classical Ogawa 395 / O395).